The sequence spans 545 residues: Capsular polysaccharide phosphotransferase SacB (545 aa).

It belongs to the stealth family.

May be the polymerase that links individual UDP-N-acetyl-D-mannosamine monomers. In serotype A the capsule is composed of repeated units of (alpha 1-6)-linked N-acetyl-D-mannosamine-1-phosphate. The chain is Capsular polysaccharide phosphotransferase SacB (sacB) from Neisseria meningitidis serogroup A.